We begin with the raw amino-acid sequence, 292 residues long: Bifunctional protein FolD 1 (292 aa).

Residue 165-167 participates in NADP(+) binding; it reads GRS.

It belongs to the tetrahydrofolate dehydrogenase/cyclohydrolase family. As to quaternary structure, homodimer.

It catalyses the reaction (6R)-5,10-methylene-5,6,7,8-tetrahydrofolate + NADP(+) = (6R)-5,10-methenyltetrahydrofolate + NADPH. The catalysed reaction is (6R)-5,10-methenyltetrahydrofolate + H2O = (6R)-10-formyltetrahydrofolate + H(+). It functions in the pathway one-carbon metabolism; tetrahydrofolate interconversion. In terms of biological role, catalyzes the oxidation of 5,10-methylenetetrahydrofolate to 5,10-methenyltetrahydrofolate and then the hydrolysis of 5,10-methenyltetrahydrofolate to 10-formyltetrahydrofolate. This chain is Bifunctional protein FolD 1, found in Myxococcus xanthus (strain DK1622).